Reading from the N-terminus, the 315-residue chain is Probable serine acetyltransferase 4 (315 aa).

Residues 287 to 315 (AKPIIGKKAAPQRRPEELPGVTMEQRWSD) are disordered.

The protein belongs to the transferase hexapeptide repeat family. As to quaternary structure, homomultimer.

It catalyses the reaction L-serine + acetyl-CoA = O-acetyl-L-serine + CoA. It functions in the pathway amino-acid biosynthesis; L-cysteine biosynthesis; L-cysteine from L-serine: step 1/2. The sequence is that of Probable serine acetyltransferase 4 (SAT4) from Oryza sativa subsp. japonica (Rice).